The sequence spans 645 residues: MADMINITFPDGAVKEFPKGTTTAEIAGSISPGLKKKALAGMLDGTLLDLNTPIEQDGTITIVTPESDEALEVLRHSTAHVMAQALKRLFKDRNVKLGVGPVIEGGFYYDVDMDESLTPEDLPKIEKEMKKIIGENLPIERVVVSREEALARYEEVGDPYKIELINDLPEDETITIYEQGEFFDLCRGVHVPSTGKLKEFKLLNLAGAYWRGDSSNKMLQRIYGTAFFKKADLDEHLRLLEEAKERDHRKLGKELGIFALSQKVGQGLPLWLPKGATIRRIIERYIVDKEEKLGYQHVYTPVLASSELYKTSGHWDHYKDDMFPTMEMENEELVLRPMNCPHHMMVYKTEMRSYRQLPLRIAELGLMHRYEMSGAVSGLQRVRGMTLNDAHIFCRPDQIKDEFVRVVRLIQAVYEDFGLKNYSFRLSYRDPEDKEKYFDDDNMWNKAQGMLKEAMDELELEYFEAEGEAAFYGPKLDVQVRTALGKDETLSTVQLDFLLPERFDLTYVGEDGQPHRPVVVHRGVVSTMERFVAFLLEEYKGAFPTWLAPVQVQVIPVSPEAHLEYAKNVQETLQQAGIRVEIDERDEKIGYKIREAQMQKIPYMLVLGDKEVEANGVNVRKYGEKDSSSMGLDEFVRHVAREAKK.

The region spanning 3–64 is the TGS domain; that stretch reads DMINITFPDG…EQDGTITIVT (62 aa). Residues 247 to 544 form a catalytic region; that stretch reads DHRKLGKELG…LLEEYKGAFP (298 aa). Residues Cys340, His391, and His521 each coordinate Zn(2+).

The protein belongs to the class-II aminoacyl-tRNA synthetase family. As to quaternary structure, homodimer. Zn(2+) is required as a cofactor.

Its subcellular location is the cytoplasm. The catalysed reaction is tRNA(Thr) + L-threonine + ATP = L-threonyl-tRNA(Thr) + AMP + diphosphate + H(+). Functionally, catalyzes the attachment of threonine to tRNA(Thr) in a two-step reaction: L-threonine is first activated by ATP to form Thr-AMP and then transferred to the acceptor end of tRNA(Thr). Also edits incorrectly charged L-seryl-tRNA(Thr). In Halalkalibacterium halodurans (strain ATCC BAA-125 / DSM 18197 / FERM 7344 / JCM 9153 / C-125) (Bacillus halodurans), this protein is Threonine--tRNA ligase.